The chain runs to 588 residues: Probable basic-leucine zipper transcription factor M (588 aa).

Positions 127–157 (QVEQQQEQEQEQEQQQKQQQQQYIEKQIQEI) form a coiled coil. Residues 221 to 240 (QQNHIDNQSLNNSNTKTSKN) are compositionally biased toward low complexity. The segment at 221-250 (QQNHIDNQSLNNSNTKTSKNQQKDNNLPKK) is disordered. In terms of domain architecture, bZIP spans 263 to 326 (NNNNIEKKRD…GSNLMRPEPE (64 aa)). Positions 269–289 (KKRDQTESSKNFREKKKEYVK) are basic motif. The segment at 291–312 (IESKILALTLENDKLKKENDSL) is leucine-zipper.

This sequence belongs to the bZIP family.

Its subcellular location is the nucleus. Functionally, probable transcriptional regulator. The protein is Probable basic-leucine zipper transcription factor M (bzpM) of Dictyostelium discoideum (Social amoeba).